We begin with the raw amino-acid sequence, 544 residues long: Chaperonin GroEL (544 aa).

ATP contacts are provided by residues 29-32 (TLGP), 86-90 (DGTTT), Gly413, 478-480 (NAA), and Asp494.

The protein belongs to the chaperonin (HSP60) family. In terms of assembly, forms a cylinder of 14 subunits composed of two heptameric rings stacked back-to-back. Interacts with the co-chaperonin GroES.

Its subcellular location is the cytoplasm. The enzyme catalyses ATP + H2O + a folded polypeptide = ADP + phosphate + an unfolded polypeptide.. Together with its co-chaperonin GroES, plays an essential role in assisting protein folding. The GroEL-GroES system forms a nano-cage that allows encapsulation of the non-native substrate proteins and provides a physical environment optimized to promote and accelerate protein folding. The sequence is that of Chaperonin GroEL from Lysinibacillus sphaericus (strain C3-41).